We begin with the raw amino-acid sequence, 56 residues long: Zinc finger mu-protein HVO_0758 (56 aa).

Positions 23, 26, 45, and 48 each coordinate Zn(2+). 2 short sequence motifs (c(P)XCG motif) span residues Cys-23–Gly-27 and Cys-45–Gly-49.

In terms of assembly, monomer.

In terms of biological role, zinc-binding protein that binds one zinc ion. Is involved in biofilm formation, swarming and glycerol metabolism regulation. This is Zinc finger mu-protein HVO_0758 from Haloferax volcanii (strain ATCC 29605 / DSM 3757 / JCM 8879 / NBRC 14742 / NCIMB 2012 / VKM B-1768 / DS2) (Halobacterium volcanii).